A 187-amino-acid polypeptide reads, in one-letter code: Signal peptidase I U (187 aa).

The Cytoplasmic portion of the chain corresponds to 1-16; sequence MNAKTITLKKKRKIKT. A helical transmembrane segment spans residues 17–37; sequence IVVLSIIMIAALIFTIRLVFY. Topologically, residues 38–187 are extracellular; sequence KPFLIEGSSM…YPFGEMRQAK (150 aa). Residues serine 46 and lysine 88 contribute to the active site.

Belongs to the peptidase S26 family.

The protein resides in the cell membrane. It catalyses the reaction Cleavage of hydrophobic, N-terminal signal or leader sequences from secreted and periplasmic proteins.. In Bacillus subtilis (strain 168), this protein is Signal peptidase I U (sipU).